Consider the following 76-residue polypeptide: Anaredoxin (76 aa).

Residues 24-66 (CMVCWEVNSKANGHHLIPYSEGGSADIQNMMTLCPSCHTKYHK) form the HNH domain.

This sequence belongs to the HNH nuclease family.

Its function is as follows. Putative P-450 reductase. The sequence is that of Anaredoxin from Nostoc sp. (strain PCC 7120 / SAG 25.82 / UTEX 2576).